The primary structure comprises 173 residues: Placenta-specific protein 1 (173 aa).

A signal peptide spans 1–23 (MKLIKFLGGVVFFTLMFSGYSEQ).

This sequence belongs to the PLAC1 family.

The protein localises to the secreted. Its function is as follows. May play a role in placental development. The chain is Placenta-specific protein 1 from Rattus norvegicus (Rat).